Consider the following 422-residue polypeptide: F-box/WD repeat-containing protein 2 (422 aa).

Residues 54 to 101 form the F-box domain; that stretch reads RDFLKLLPLELSFYLLKWLDPQTLLTCCLVSKQWNKVISACTEVWQTA. WD repeat units lie at residues 146–183, 185–221, 224–265, and 276–314; these read GHSARVYALYYKDGLLCTGSDDLSAKLWDVSTGQCVYG, QTHTCAAVKFDEQKLVTGSFDNTVACWEWSSGARTQH, GHTG…NTLT, and LQKCKVKSLLHSPGDYILLSADKYEIKIWPIGREINCKC. An N6-acetyllysine modification is found at Lys-298.

Directly interacts with SKP1 and CUL1. In terms of tissue distribution, widely expressed during embryogenesis and in adult tissues.

Functionally, substrate-recognition component of the SCF (SKP1-CUL1-F-box protein)-type E3 ubiquitin ligase complex. In Mus musculus (Mouse), this protein is F-box/WD repeat-containing protein 2 (Fbxw2).